The primary structure comprises 615 residues: MLNRFIAFFRSVFLIGLVATAFGALPARAANETAPDYALSMHGDVALPADYTHFPYTNPDAPKKGSLTVGVVGTFDSLNPFVLKSMRTTARGLYNDGEFGNMVYQTLMLRSRDEPFTLYSLLAEKVAIDPERKWVEFTLNPKAKWSDGQPVTVDDVLFTYDILTEKGRPPYNSRMSRVAKIEKTGERSVRFTFNEKSDREFPMLIAGSMPVLPKHAINRDTFGNSTLEPPIGSGPYVVASVQPGQRIVYKRNPDYWGKDLPSQRGFNNFDKISIEYYRNETSLFESFKKGILDIFIEGNPIRWEKLYDFPAVEQGKVIKDTFEKGTPADMLGFVFNTRRPIFADRRVRQALGLLFDFEWANRNLFAGQYRRTQSFWEGSQLSSVGRPADARERELLAAFPGAVREDVMNGTWHPPVTDGSGHDRVPAKKAYDLLSQAGFQFKDGMAIDPTGKPFAFEIMTRSPDEEKIALAYQRNLSRLGIAVEIHTVDDAQYQQRLQTFDYDMILGALASSLSPGNEQWLRWGSASRDVQGSFNFAGVADPAVDAMIEALLAARNRADFVSAVRALDRVLISGDYYVPLYHLPYQWVARWDRIEHPQKTPLSGYQLPTWWHTSQ.

The N-terminal stretch at Met-1–Ala-29 is a signal peptide.

This sequence belongs to the bacterial solute-binding protein 5 family.

Its subcellular location is the periplasm. The protein is Putative binding protein BRA0576/BS1330_II0571 of Brucella suis biovar 1 (strain 1330).